A 91-amino-acid polypeptide reads, in one-letter code: Acylphosphatase (91 aa).

Residues 5-91 (RAHVFVSGRV…EGVDGFEVRW (87 aa)) enclose the Acylphosphatase-like domain. Catalysis depends on residues Arg20 and Asn38.

This sequence belongs to the acylphosphatase family.

It carries out the reaction an acyl phosphate + H2O = a carboxylate + phosphate + H(+). The polypeptide is Acylphosphatase (acyP) (Haloarcula marismortui (strain ATCC 43049 / DSM 3752 / JCM 8966 / VKM B-1809) (Halobacterium marismortui)).